A 313-amino-acid polypeptide reads, in one-letter code: Caffeic acid 3-O-methyltransferase (313 aa).

112-118 (IDQDRVF) contributes to the substrate binding site. The interval 144–162 (AFDYPGTDPRFNKIFNRAM) is substrate binding. Positions 190, 213, 233, 234, and 247 each coordinate S-adenosyl-L-methionine. H251 serves as the catalytic Proton acceptor.

Belongs to the class I-like SAM-binding methyltransferase superfamily. Cation-independent O-methyltransferase family. COMT subfamily. In terms of assembly, homodimer.

It carries out the reaction (E)-caffeate + S-adenosyl-L-methionine = (E)-ferulate + S-adenosyl-L-homocysteine + H(+). The protein operates within aromatic compound metabolism; phenylpropanoid biosynthesis. Catalyzes the conversion of caffeic acid to ferulic acid and of 5-hydroxyferulic acid to sinapic acid. The resulting products may subsequently be converted to the corresponding alcohols that are incorporated into lignins. The protein is Caffeic acid 3-O-methyltransferase (COMT1) of Eucalyptus globulus (Tasmanian blue gum).